Consider the following 242-residue polypeptide: Stress response regulator protein 1 (242 aa).

The region spanning 118–236 (NFLLVDDNFI…FDHIITCIEK (119 aa)) is the Response regulatory domain. Aspartate 169 is modified (4-aspartylphosphate).

Functionally, required for stress adaptation, morphogenesis and virulence. The chain is Stress response regulator protein 1 (SRR1) from Debaryomyces hansenii (strain ATCC 36239 / CBS 767 / BCRC 21394 / JCM 1990 / NBRC 0083 / IGC 2968) (Yeast).